A 272-amino-acid chain; its full sequence is sn-1 stearoyl-lipid 9-desaturase (272 aa).

Helical transmembrane passes span 11 to 31 (INWVNTLFFLGLHIGALFAFI) and 39 to 59 (AVGVALLLYWITGGLGITLGF). Residues 60–65 (HRLVTH) carry the Histidine box-1 motif. Residues 97–101 (HRIHH) carry the Histidine box-2 motif. The helical transmembrane segment at 160–180 (IALGLLLLYLGGWSFVVWGVF) threads the bilayer. The Histidine box-3 motif lies at 230-234 (HHAFQ).

It belongs to the fatty acid desaturase type 2 family. Fe(2+) serves as cofactor.

It is found in the membrane. It carries out the reaction a 1-octadecanoyl 2-acyl-glycerolipid + 2 reduced [2Fe-2S]-[ferredoxin] + O2 + 2 H(+) = a 1-[(9Z)-octadecenoyl]-2-acyl-glycerolipid + 2 oxidized [2Fe-2S]-[ferredoxin] + 2 H2O. It participates in lipid metabolism; polyunsaturated fatty acid biosynthesis. Functionally, desaturase involved in fatty acid biosynthesis. Introduces a double bond at carbon 9 of stearoyl groups (18:0) attached to the sn-1 position of the glycerol moiety of membrane glycerolipids. Does not desaturate palmitic acid (16:0), palmitoleic acid (16:1) and cis-vaccenic acid (18:1). The sequence is that of sn-1 stearoyl-lipid 9-desaturase from Anabaena variabilis.